A 262-amino-acid chain; its full sequence is Glutamate racemase (262 aa).

Substrate is bound by residues 9-10 (DS) and 41-42 (YG). Cys-73 acts as the Proton donor/acceptor in catalysis. 74–75 (NT) contributes to the substrate binding site. Cys-180 acts as the Proton donor/acceptor in catalysis. A substrate-binding site is contributed by 181–182 (TH).

Belongs to the aspartate/glutamate racemases family.

It carries out the reaction L-glutamate = D-glutamate. The protein operates within cell wall biogenesis; peptidoglycan biosynthesis. Functionally, provides the (R)-glutamate required for cell wall biosynthesis. This is Glutamate racemase from Aliivibrio fischeri (strain ATCC 700601 / ES114) (Vibrio fischeri).